A 159-amino-acid chain; its full sequence is 3-hydroxyacyl-[acyl-carrier-protein] dehydratase FabZ (159 aa).

Residue histidine 58 is part of the active site.

The protein belongs to the thioester dehydratase family. FabZ subfamily.

Its subcellular location is the cytoplasm. The enzyme catalyses a (3R)-hydroxyacyl-[ACP] = a (2E)-enoyl-[ACP] + H2O. Functionally, involved in unsaturated fatty acids biosynthesis. Catalyzes the dehydration of short chain beta-hydroxyacyl-ACPs and long chain saturated and unsaturated beta-hydroxyacyl-ACPs. This is 3-hydroxyacyl-[acyl-carrier-protein] dehydratase FabZ from Helicobacter pylori (strain Shi470).